A 398-amino-acid polypeptide reads, in one-letter code: Phosphoglycerate kinase (398 aa).

Residues 21-23 (DIN), arginine 36, 59-62 (HFGR), arginine 118, and arginine 151 each bind substrate. Residues lysine 201, glutamate 323, and 353–356 (GGDT) contribute to the ATP site.

The protein belongs to the phosphoglycerate kinase family. Monomer.

It localises to the cytoplasm. The enzyme catalyses (2R)-3-phosphoglycerate + ATP = (2R)-3-phospho-glyceroyl phosphate + ADP. It functions in the pathway carbohydrate degradation; glycolysis; pyruvate from D-glyceraldehyde 3-phosphate: step 2/5. This chain is Phosphoglycerate kinase, found in Ruegeria pomeroyi (strain ATCC 700808 / DSM 15171 / DSS-3) (Silicibacter pomeroyi).